Here is a 253-residue protein sequence, read N- to C-terminus: uncharacterized protein (253 aa).

Leucine 10–phenylalanine 34 contributes to the NADP(+) binding site. Substrate is bound at residue serine 142. Tyrosine 155 (proton acceptor) is an active-site residue.

It belongs to the short-chain dehydrogenases/reductases (SDR) family.

This is an uncharacterized protein from Myxococcus xanthus (strain DK1622).